A 163-amino-acid chain; its full sequence is Urease accessory protein UreE (163 aa).

A disordered region spans residues 130 to 163 (PFEPEPGAYGGGHGHTHSHDHSHQHDPAGHAHEH). The segment covering 146 to 163 (HSHDHSHQHDPAGHAHEH) has biased composition (basic and acidic residues).

The protein belongs to the UreE family.

The protein resides in the cytoplasm. Functionally, involved in urease metallocenter assembly. Binds nickel. Probably functions as a nickel donor during metallocenter assembly. The chain is Urease accessory protein UreE from Alkalilimnicola ehrlichii (strain ATCC BAA-1101 / DSM 17681 / MLHE-1).